The chain runs to 70 residues: Probable non-specific lipid-transfer protein 2 (70 aa).

Disulfide bonds link Cys4/Cys38, Cys12/Cys26, Cys27/Cys62, and Cys36/Cys69.

Potential phospholipid transfer protein. In Zea mays (Maize), this protein is Probable non-specific lipid-transfer protein 2.